Reading from the N-terminus, the 355-residue chain is Galectin-9 (355 aa).

2 Galectin domains span residues 17-148 (FSGT…ISFQ) and 227-355 (FITT…HVQT). Residues asparagine 48, histidine 61, arginine 65, asparagine 75, 82–88 (WGPEERK), histidine 267, arginine 271, threonine 281, and 287–293 (WGSEERS) each bind a beta-D-galactoside.

In terms of assembly, monomer. Peripheral blood leukocytes and lymphatic tissues. Expressed in lung, liver, breast and kidney with higher levels in tumor endothelial cells than normal endothelium (at protein level). Expressed in trophoblast cells in decidua and placenta in pregnancy (at protein level). Isoform 2 is the most abundant isoform expressed in endothelial cells. Upon endothelial cell activation isoform 2 expression decreases while expression of isoform 3 and isoform 5 increases. Isoform 4 decreases in pathological pregnancy.

Its subcellular location is the cytoplasm. It localises to the nucleus. It is found in the secreted. Binds galactosides. Has high affinity for the Forssman pentasaccharide. Ligand for HAVCR2/TIM3. Binding to HAVCR2 induces T-helper type 1 lymphocyte (Th1) death. Also stimulates bactericidal activity in infected macrophages by causing macrophage activation and IL1B secretion which restricts intracellular bacterial growth. Ligand for P4HB; the interaction retains P4HB at the cell surface of Th2 T-helper cells, increasing disulfide reductase activity at the plasma membrane, altering the plasma membrane redox state and enhancing cell migration. Ligand for CD44; the interaction enhances binding of SMAD3 to the FOXP3 promoter, leading to up-regulation of FOXP3 expression and increased induced regulatory T (iTreg) cell stability and suppressive function. Promotes ability of mesenchymal stromal cells to suppress T-cell proliferation. Expands regulatory T-cells and induces cytotoxic T-cell apoptosis following virus infection. Activates ERK1/2 phosphorylation inducing cytokine (IL-6, IL-8, IL-12) and chemokine (CCL2) production in mast and dendritic cells. Inhibits degranulation and induces apoptosis of mast cells. Induces maturation and migration of dendritic cells. Inhibits natural killer (NK) cell function. Can transform NK cell phenotype from peripheral to decidual during pregnancy. Astrocyte derived galectin-9 enhances microglial TNF production. May play a role in thymocyte-epithelial interactions relevant to the biology of the thymus. May provide the molecular basis for urate flux across cell membranes, allowing urate that is formed during purine metabolism to efflux from cells and serving as an electrogenic transporter that plays an important role in renal and gastrointestinal urate excretion. Highly selective to the anion urate. In terms of biological role, acts as an eosinophil chemoattractant. It also inhibits angiogenesis. Suppresses IFNG production by natural killer cells. This Homo sapiens (Human) protein is Galectin-9 (LGALS9).